The following is a 390-amino-acid chain: Ribonuclease D (390 aa).

In terms of domain architecture, 3'-5' exonuclease spans 7–173 (ITDSATLAAL…TLFPMLLKEL (167 aa)). Positions 212-293 (KADILGRLKA…ENAEALRPEE (82 aa)) constitute an HRDC domain.

This sequence belongs to the RNase D family. Requires a divalent metal cation as cofactor.

The protein localises to the cytoplasm. The enzyme catalyses Exonucleolytic cleavage that removes extra residues from the 3'-terminus of tRNA to produce 5'-mononucleotides.. Functionally, exonuclease involved in the 3' processing of various precursor tRNAs. Initiates hydrolysis at the 3'-terminus of an RNA molecule and releases 5'-mononucleotides. The protein is Ribonuclease D of Zymomonas mobilis subsp. mobilis (strain ATCC 31821 / ZM4 / CP4).